A 332-amino-acid polypeptide reads, in one-letter code: Zinc finger protein CONSTANS-LIKE 13 (332 aa).

Positions 13, 16, 36, 41, 56, 59, 79, and 84 each coordinate Zn(2+). A B box-type 1; atypical zinc finger spans residues 13–55; that stretch reads CDYCDSSVALVYCKADSAKLCLACDKQVHVANQLFAKHFRSLL. The B box-type 2; atypical zinc finger occupies 56 to 96; that stretch reads CDSCNESPSSLFCETERSVLCQNCDWQHHTASSSLHSRRPF. One can recognise a CCT domain in the interval 287–329; sequence RNSALSRYKEKKKSRRYEKHIRYESRKVRAESRTRIRGRFAKA.

The protein belongs to the CONSTANS family.

The protein localises to the nucleus. In Arabidopsis thaliana (Mouse-ear cress), this protein is Zinc finger protein CONSTANS-LIKE 13 (COL13).